Reading from the N-terminus, the 257-residue chain is Tryptophan synthase alpha chain (257 aa).

Catalysis depends on proton acceptor residues Glu51 and Asp62.

The protein belongs to the TrpA family. As to quaternary structure, tetramer of two alpha and two beta chains.

It catalyses the reaction (1S,2R)-1-C-(indol-3-yl)glycerol 3-phosphate + L-serine = D-glyceraldehyde 3-phosphate + L-tryptophan + H2O. It participates in amino-acid biosynthesis; L-tryptophan biosynthesis; L-tryptophan from chorismate: step 5/5. The alpha subunit is responsible for the aldol cleavage of indoleglycerol phosphate to indole and glyceraldehyde 3-phosphate. This is Tryptophan synthase alpha chain from Nitratidesulfovibrio vulgaris (strain ATCC 29579 / DSM 644 / CCUG 34227 / NCIMB 8303 / VKM B-1760 / Hildenborough) (Desulfovibrio vulgaris).